Here is a 159-residue protein sequence, read N- to C-terminus: Small ribosomal subunit protein uS19 (159 aa).

The protein belongs to the universal ribosomal protein uS19 family.

Functionally, protein S19 forms a complex with S13 that binds strongly to the 16S ribosomal RNA. The sequence is that of Small ribosomal subunit protein uS19 from Pyrobaculum arsenaticum (strain DSM 13514 / JCM 11321 / PZ6).